Here is a 514-residue protein sequence, read N- to C-terminus: Cilia- and flagella-associated protein 53 (514 aa).

2 coiled-coil regions span residues Ile-91–Phe-148 and Lys-203–Glu-474.

This sequence belongs to the CFAP53 family. Microtubule inner protein component of sperm flagellar doublet microtubules. Interacts with PIERCE1 and PIERCE2; the interactions link outer dynein arms docking complex (ODA-DC) to the internal microtubule inner proteins (MIP) in cilium axoneme. Interacts with CCDC38. Interacts with CCDC42 and IFT88. Interacts with centriolar satellite proteins PIBF1/CEP90 and PCM1. Interacts with dyneins DNAIC1, DNAIC2 AND DNAH11 and with ODA-DC component ODAD4/TTC25. In terms of tissue distribution, expressed in skin fibroblasts (at protein level). Expressed in nasal respiratory epithelial cells (at protein level). Expressed in airway epithelial cells.

The protein localises to the cytoplasm. It is found in the cytoskeleton. It localises to the cilium axoneme. The protein resides in the flagellum axoneme. Its subcellular location is the microtubule organizing center. The protein localises to the centrosome. It is found in the centriole. It localises to the centriolar satellite. The protein resides in the spindle pole. Its subcellular location is the cell projection. The protein localises to the cilium. Microtubule inner protein (MIP) part of the dynein-decorated doublet microtubules (DMTs) in cilia axoneme, which is required for motile cilia beating. Regulates motility patterns of both 9+0 and 9+2 motile cilia through differential localization and recruitment of axonemal dynein components. Required for centriolar satellite integrity and non-motile cilium assembly. Required for motile cilium formation. Through its role in the beating of primary cilia, involved in the establishment of organ laterality during embryogenesis. Required for sperm flagellum biogenesis and is essential for male fertility. The chain is Cilia- and flagella-associated protein 53 from Homo sapiens (Human).